The sequence spans 412 residues: Divalent metal cation transporter MntH (412 aa).

Residues 1–19 are Cytoplasmic-facing; that stretch reads MTNYRVESSSGRAARKMRL. Residues 20-39 form a helical membrane-spanning segment; that stretch reads ALMGPAFIAAIGYIDPGNFA. Residues 40–51 lie on the Periplasmic side of the membrane; it reads TNIQAGASFGYQ. Residues 52–71 form a helical membrane-spanning segment; that stretch reads LLWVVVWANLMAMLIQILSA. The Cytoplasmic portion of the chain corresponds to 72–95; sequence KLGIATGKNLAEQIRDHYPRPFVW. The helical transmembrane segment at 96–118 threads the bilayer; the sequence is FYWVQAEIIAMATDLAEFIGAAI. The Periplasmic portion of the chain corresponds to 119–125; the sequence is GFKLILG. The chain crosses the membrane as a helical span at residues 126-145; it reads VSLLQGAVLTGIATFLILML. Residues 146-155 are Cytoplasmic-facing; that stretch reads QRRGQKPLEK. A helical membrane pass occupies residues 156 to 175; sequence VIGGLLLFVAAAYIVELIFS. The Periplasmic portion of the chain corresponds to 176–196; sequence QPNLAQLGKGMVIPSLPTSEA. The helical transmembrane segment at 197–220 threads the bilayer; that stretch reads VFLAAGVLGATIMPHVIYLHSSLT. Topologically, residues 221–238 are cytoplasmic; it reads QHLHGGSRQQRYSATKWD. The chain crosses the membrane as a helical span at residues 239-258; it reads VAIAMTIAGFVNLAMMATAA. At 259 to 276 the chain is on the periplasmic side; sequence AAFHFSGHTGVADLDEAY. The helical transmembrane segment at 277 to 297 threads the bilayer; sequence LTLQPLLSHAAATVFGLSLVA. The Cytoplasmic segment spans residues 298-327; it reads AGLSSTVVGTLAGQVVMQGFIRFHIPLWVR. Residues 328 to 344 traverse the membrane as a helical segment; sequence RTVTMLPSFIVILMGLD. Residues 345-350 are Periplasmic-facing; sequence PTRILV. A helical membrane pass occupies residues 351 to 370; it reads MSQVLLSFGIALALVPLLIF. The Cytoplasmic portion of the chain corresponds to 371 to 387; the sequence is TSDSKLMGDLVNSKRVK. Residues 388–406 traverse the membrane as a helical segment; the sequence is QTGWVIVVLVVALNIWLLV. The Periplasmic portion of the chain corresponds to 407-412; the sequence is GTALGL.

It belongs to the NRAMP family.

It localises to the cell inner membrane. H(+)-stimulated, divalent metal cation uptake system. In Escherichia coli O127:H6 (strain E2348/69 / EPEC), this protein is Divalent metal cation transporter MntH.